We begin with the raw amino-acid sequence, 1392 residues long: ATP-dependent helicase/nuclease subunit A (1392 aa).

The UvrD-like helicase ATP-binding domain occupies Phe4–Met595. Ala25 to Thr32 provides a ligand contact to ATP. One can recognise a UvrD-like helicase C-terminal domain in the interval Ala623–Gly929.

This sequence belongs to the helicase family. AddA subfamily. Heterodimer of AddA and AddB/RexB. The cofactor is Mg(2+).

The catalysed reaction is Couples ATP hydrolysis with the unwinding of duplex DNA by translocating in the 3'-5' direction.. It catalyses the reaction ATP + H2O = ADP + phosphate + H(+). The heterodimer acts as both an ATP-dependent DNA helicase and an ATP-dependent, dual-direction single-stranded exonuclease. Recognizes the chi site generating a DNA molecule suitable for the initiation of homologous recombination. The AddA nuclease domain is required for chi fragment generation; this subunit has the helicase and 3' -&gt; 5' nuclease activities. This chain is ATP-dependent helicase/nuclease subunit A, found in Limosilactobacillus reuteri subsp. reuteri (strain JCM 1112) (Lactobacillus reuteri).